Reading from the N-terminus, the 522-residue chain is Maturase K (522 aa).

The protein belongs to the intron maturase 2 family. MatK subfamily.

It localises to the plastid. Its subcellular location is the chloroplast. Its function is as follows. Usually encoded in the trnK tRNA gene intron. Probably assists in splicing its own and other chloroplast group II introns. The sequence is that of Maturase K from Schizorhiza neglecta (Lapeirousia neglecta).